We begin with the raw amino-acid sequence, 175 residues long: Large ribosomal subunit protein uL10 (175 aa).

This sequence belongs to the universal ribosomal protein uL10 family. Part of the ribosomal stalk of the 50S ribosomal subunit. The N-terminus interacts with L11 and the large rRNA to form the base of the stalk. The C-terminus forms an elongated spine to which L12 dimers bind in a sequential fashion forming a multimeric L10(L12)X complex.

Its function is as follows. Forms part of the ribosomal stalk, playing a central role in the interaction of the ribosome with GTP-bound translation factors. The chain is Large ribosomal subunit protein uL10 from Prochlorococcus marinus (strain MIT 9313).